Consider the following 154-residue polypeptide: Ubiquitin-like protein 4A (154 aa).

The Ubiquitin-like domain maps to 1–76; it reads MILTVKPLQG…LNLVVRPAGE (76 aa).

As to quaternary structure, component of the bag6/bat3 complex.

Its subcellular location is the cytoplasm. It is found in the cytosol. The protein localises to the nucleus. Functionally, as part of a cytosolic protein quality control complex, the bag6/bat3 complex, maintains misfolded and hydrophobic patches-containing proteins in a soluble state and participates in their proper delivery to the endoplasmic reticulum or alternatively can promote their sorting to the proteasome where they undergo degradation. The bag6/bat3 complex is involved in the post-translational delivery of tail-anchored/type II transmembrane proteins to the endoplasmic reticulum membrane. Similarly, the bag6/bat3 complex also functions as a sorting platform for proteins of the secretory pathway that are mislocalized to the cytosol either delivering them to the proteasome for degradation or to the endoplasmic reticulum. The bag6/bat3 complex also plays a role in the endoplasmic reticulum-associated degradation (ERAD), a quality control mechanism that eliminates unwanted proteins of the endoplasmic reticulum through their retrotranslocation to the cytosol and their targeting to the proteasome. It maintains these retrotranslocated proteins in an unfolded yet soluble state condition in the cytosol to ensure their proper delivery to the proteasome. In Esox lucius (Northern pike), this protein is Ubiquitin-like protein 4A (ubl4a).